The sequence spans 496 residues: Probable ATP-dependent DNA helicase RecS (496 aa).

Residues 25–192 form the Helicase ATP-binding domain; the sequence is IESILSGKDT…MNLLELQHAV (168 aa). 38-45 is a binding site for ATP; that stretch reads LPTGGGKS. A DEAH box motif is present at residues 136-139; the sequence is DEAH. The Helicase C-terminal domain occupies 219 to 363; the sequence is RVIQLVENLQ…EIADVIRVLE (145 aa).

The protein belongs to the helicase family. RecQ subfamily. In terms of assembly, interacts with SSB (ssbA) and YpbB.

The protein resides in the cytoplasm. It localises to the nucleoid. It catalyses the reaction Couples ATP hydrolysis with the unwinding of duplex DNA by translocating in the 3'-5' direction.. The enzyme catalyses ATP + H2O = ADP + phosphate + H(+). Probable 3'-5' DNA helicase. Required in synaptic and/or post-synaptic stages of recombination. Probably has an overlapping function with RecQ. It probably acts to help generate ss-DNA from ds-DNA breaks. The protein is Probable ATP-dependent DNA helicase RecS of Bacillus subtilis (strain 168).